Reading from the N-terminus, the 492-residue chain is Bifunctional purine biosynthesis protein PurH (492 aa).

Positions M1–V144 constitute an MGS-like domain.

It belongs to the PurH family.

It carries out the reaction (6R)-10-formyltetrahydrofolate + 5-amino-1-(5-phospho-beta-D-ribosyl)imidazole-4-carboxamide = 5-formamido-1-(5-phospho-D-ribosyl)imidazole-4-carboxamide + (6S)-5,6,7,8-tetrahydrofolate. The enzyme catalyses IMP + H2O = 5-formamido-1-(5-phospho-D-ribosyl)imidazole-4-carboxamide. The protein operates within purine metabolism; IMP biosynthesis via de novo pathway; 5-formamido-1-(5-phospho-D-ribosyl)imidazole-4-carboxamide from 5-amino-1-(5-phospho-D-ribosyl)imidazole-4-carboxamide (10-formyl THF route): step 1/1. It participates in purine metabolism; IMP biosynthesis via de novo pathway; IMP from 5-formamido-1-(5-phospho-D-ribosyl)imidazole-4-carboxamide: step 1/1. In Staphylococcus carnosus (strain TM300), this protein is Bifunctional purine biosynthesis protein PurH.